A 117-amino-acid polypeptide reads, in one-letter code: Hydrogenase maturation factor HypA (117 aa).

His2 is a binding site for Ni(2+). Residues Cys74, Cys77, Cys91, and Cys94 each coordinate Zn(2+).

It belongs to the HypA/HybF family.

Its function is as follows. Involved in the maturation of [NiFe] hydrogenases. Required for nickel insertion into the metal center of the hydrogenase. This Helicobacter pylori (strain J99 / ATCC 700824) (Campylobacter pylori J99) protein is Hydrogenase maturation factor HypA.